Here is a 257-residue protein sequence, read N- to C-terminus: Transmembrane protein C257L (257 aa).

Helical transmembrane passes span 123–143 (LELL…FTAL) and 163–183 (MMIF…YVLV).

It belongs to the asfivirus C257R family.

The protein resides in the host membrane. Its subcellular location is the virion. The protein is Transmembrane protein C257L of African swine fever virus (isolate Tick/South Africa/Pretoriuskop Pr4/1996) (ASFV).